A 60-amino-acid polypeptide reads, in one-letter code: Potassium channel toxin alpha-KTx 15.8 (60 aa).

Residues methionine 1–cysteine 22 form the signal peptide. Pyrrolidone carboxylic acid is present on glutamine 23. 3 disulfide bridges follow: cysteine 30-cysteine 50, cysteine 35-cysteine 55, and cysteine 39-cysteine 57.

Belongs to the short scorpion toxin superfamily. Potassium channel inhibitor family. Alpha-KTx 15 subfamily. In terms of tissue distribution, expressed by the venom gland.

It localises to the secreted. Blocker of A-type voltage-gated potassium channels of cerebellar granular cells. May also inhibit Kv4/KCND when coexpressed with DPP6 or DPP10. The occlusion of the outer entry of the K(+) conducting pore is partially reversible and affects both open and closed channels. It shares the same target in rat brain than BmTX3 (AC Q8I0L5) and AmmTX3 (AC P60208). Also shows a weak inhibition on Kv1.2/KCNA2 and Kv1.3/KCNA3 voltage-gated potassium channels. The chain is Potassium channel toxin alpha-KTx 15.8 from Olivierus martensii (Manchurian scorpion).